A 288-amino-acid polypeptide reads, in one-letter code: N(1)-aminopropylagmatine ureohydrolase (288 aa).

6 residues coordinate Mn(2+): histidine 114, aspartate 133, histidine 135, aspartate 137, aspartate 213, and aspartate 215.

The protein belongs to the arginase family. Mn(2+) serves as cofactor.

The protein resides in the cytoplasm. The enzyme catalyses N(1)-(3-aminopropyl)agmatine + H2O = urea + spermidine. The catalysed reaction is agmatine + H2O = urea + putrescine. It functions in the pathway amine and polyamine biosynthesis; spermidine biosynthesis. Involved in the biosynthesis of polyamines which are thought to support the growth of thermophilic microorganisms under high-temperature conditions. It seems that long-chain and branched-chain of polyamines effectively stabilize DNA and RNA, respectively. Catalyzes the decarboxylation of N1-(3-aminopropyl)agmatine to yield spermidine and urea. It can also use agmatine to yield putrescine. The protein is N(1)-aminopropylagmatine ureohydrolase of Thermococcus kodakarensis (strain ATCC BAA-918 / JCM 12380 / KOD1) (Pyrococcus kodakaraensis (strain KOD1)).